The chain runs to 127 residues: Protein MGF 110-14L (127 aa).

The signal sequence occupies residues Met-1 to Ala-17.

It belongs to the asfivirus MGF 110 family.

In terms of biological role, plays a role in virus cell tropism, and may be required for efficient virus replication in macrophages. This is Protein MGF 110-14L from Ornithodoros (relapsing fever ticks).